The following is a 248-amino-acid chain: Probable transcriptional regulatory protein AZC_0510 (248 aa).

This sequence belongs to the TACO1 family.

It is found in the cytoplasm. The protein is Probable transcriptional regulatory protein AZC_0510 of Azorhizobium caulinodans (strain ATCC 43989 / DSM 5975 / JCM 20966 / LMG 6465 / NBRC 14845 / NCIMB 13405 / ORS 571).